The sequence spans 439 residues: Choline monooxygenase, chloroplastic (439 aa).

The N-terminal 60 residues, 1 to 60, are a transit peptide targeting the chloroplast; that stretch reads MMAASASATTMLLKYPTTVCGIPNPSSNNNNDPSNNIVSIPQNTTNPTLKSRTPNKITTN. Positions 24–41 are enriched in low complexity; that stretch reads NPSSNNNNDPSNNIVSIP. Residues 24 to 54 form a disordered region; sequence NPSSNNNNDPSNNIVSIPQNTTNPTLKSRTP. Positions 42–54 are enriched in polar residues; sequence QNTTNPTLKSRTP. The 108-residue stretch at 120-227 folds into the Rieske domain; it reads WQVAGISDQI…VAVWGPFVLI (108 aa). Residues Cys162, His164, Cys181, and His184 each contribute to the [2Fe-2S] cluster site. Fe cation-binding residues include His287 and His292.

Homotrimer or homodimer. [2Fe-2S] cluster is required as a cofactor. It depends on Fe cation as a cofactor. Requires Mg(2+) as cofactor. As to expression, expressed in leaves.

Its subcellular location is the plastid. It localises to the chloroplast stroma. The catalysed reaction is choline + 2 reduced [2Fe-2S]-[ferredoxin] + O2 + 2 H(+) = betaine aldehyde hydrate + 2 oxidized [2Fe-2S]-[ferredoxin] + H2O. It functions in the pathway amine and polyamine biosynthesis; betaine biosynthesis via choline pathway; betaine aldehyde from choline (monooxygenase route): step 1/1. Its function is as follows. Catalyzes the first step of the osmoprotectant glycine betaine synthesis. In Spinacia oleracea (Spinach), this protein is Choline monooxygenase, chloroplastic (CMO).